The sequence spans 284 residues: 2-dehydro-3-deoxyphosphooctonate aldolase (284 aa).

It belongs to the KdsA family.

It is found in the cytoplasm. The catalysed reaction is D-arabinose 5-phosphate + phosphoenolpyruvate + H2O = 3-deoxy-alpha-D-manno-2-octulosonate-8-phosphate + phosphate. The protein operates within carbohydrate biosynthesis; 3-deoxy-D-manno-octulosonate biosynthesis; 3-deoxy-D-manno-octulosonate from D-ribulose 5-phosphate: step 2/3. It functions in the pathway bacterial outer membrane biogenesis; lipopolysaccharide biosynthesis. This is 2-dehydro-3-deoxyphosphooctonate aldolase from Klebsiella pneumoniae subsp. pneumoniae (strain ATCC 700721 / MGH 78578).